The following is a 360-amino-acid chain: 3-dehydroquinate synthase (360 aa).

NAD(+) contacts are provided by residues 71-76 (DGEQYK), 105-109 (GVVGD), 129-130 (TT), lysine 142, lysine 151, and 169-172 (TLNT). Residues glutamate 184, histidine 248, and histidine 265 each coordinate Zn(2+).

The protein belongs to the sugar phosphate cyclases superfamily. Dehydroquinate synthase family. Requires Co(2+) as cofactor. Zn(2+) serves as cofactor. The cofactor is NAD(+).

The protein localises to the cytoplasm. It carries out the reaction 7-phospho-2-dehydro-3-deoxy-D-arabino-heptonate = 3-dehydroquinate + phosphate. Its pathway is metabolic intermediate biosynthesis; chorismate biosynthesis; chorismate from D-erythrose 4-phosphate and phosphoenolpyruvate: step 2/7. Its function is as follows. Catalyzes the conversion of 3-deoxy-D-arabino-heptulosonate 7-phosphate (DAHP) to dehydroquinate (DHQ). This chain is 3-dehydroquinate synthase, found in Coxiella burnetii (strain CbuK_Q154) (Coxiella burnetii (strain Q154)).